The following is a 61-amino-acid chain: Lens epithelial cell protein LEP503 (61 aa).

The polypeptide is Lens epithelial cell protein LEP503 (Lenep) (Mus musculus (Mouse)).